Consider the following 923-residue polypeptide: Calmodulin-binding transcription activator 5 (923 aa).

Positions 25 to 151 form a DNA-binding region, CG-1; that stretch reads IQTMLDEAYS…YRETHEVHAA (127 aa). Residues 272–372 are transcription activation; that stretch reads VYQNNNSCGA…HSHSDIPEQV (101 aa). Residues 611-640 form an ANK repeat; it reads QGWTALHWAAYYGREKMVAALLSAGARPNL. 3 IQ domains span residues 757 to 786, 799 to 828, and 875 to 904; these read NIIA…IQYR, MRKK…SVGV, and LERS…AHEE. A calmodulin-binding region spans residues 824–846; it reads WSVGVLEKAILRWRLKRKGFRGL. The stretch at 887–914 forms a coiled coil; sequence RSKKAQQDYRRMKLAHEEAQLEYDGMQE.

This sequence belongs to the CAMTA family. In terms of tissue distribution, expressed in roots, stems, leaves, pollen, top of sepals and siliques.

The protein resides in the nucleus. Transcription activator. Binds to the DNA consensus sequence 5'-[ACG]CGCG[GTC]-3'. Regulates transcriptional activity in response to calcium signals. Binds calmodulin in a calcium-dependent manner. Involved in response to cold. Contributes together with CAMTA3 to the positive regulation of the cold-induced expression of DREB1A/CBF3, DREB1B/CBF1 and DREB1C/CBF2. This is Calmodulin-binding transcription activator 5 from Arabidopsis thaliana (Mouse-ear cress).